A 260-amino-acid polypeptide reads, in one-letter code: Methyl-coenzyme M reductase subunit gamma (260 aa).

A coenzyme M-binding site is contributed by R123.

Belongs to the methyl-coenzyme M reductase gamma subunit family. As to quaternary structure, MCR is a hexamer of two alpha, two beta, and two gamma chains, forming a dimer of heterotrimers. Requires coenzyme F430 as cofactor.

Its subcellular location is the cytoplasm. It catalyses the reaction coenzyme B + methyl-coenzyme M = methane + coenzyme M-coenzyme B heterodisulfide. It participates in one-carbon metabolism; methyl-coenzyme M reduction; methane from methyl-coenzyme M: step 1/1. Component of the methyl-coenzyme M reductase (MCR) I that catalyzes the reductive cleavage of methyl-coenzyme M (CoM-S-CH3 or 2-(methylthio)ethanesulfonate) using coenzyme B (CoB or 7-mercaptoheptanoylthreonine phosphate) as reductant which results in the production of methane and the mixed heterodisulfide of CoB and CoM (CoM-S-S-CoB). This is the final step in methanogenesis. This is Methyl-coenzyme M reductase subunit gamma (mcrG) from Methanococcus vannielii.